The following is a 152-amino-acid chain: MTITDLVLILFIAALLAFAIYDQFIMPRRNGPTLLAIPLLRRGRIDSVIFVGLIVILIYNNVTNHGALITTWLLSALALMGFYIFWIRVPKIIFKQKGFFFANVWIEYSRIKAMNLSEDGVLVMQLEQRRLLIRVRNIDDLEKIYKLLVSTQ.

A run of 3 helical transmembrane segments spans residues 6-26 (LVLI…QFIM), 45-65 (IDSV…VTNH), and 67-87 (ALIT…IFWI).

The protein belongs to the UPF0266 family.

The protein localises to the cell inner membrane. The polypeptide is UPF0266 membrane protein YobD (Shigella dysenteriae serotype 1 (strain Sd197)).